The following is a 234-amino-acid chain: Large ribosomal subunit protein uL1 (234 aa).

The protein belongs to the universal ribosomal protein uL1 family. Part of the 50S ribosomal subunit.

Its function is as follows. Binds directly to 23S rRNA. The L1 stalk is quite mobile in the ribosome, and is involved in E site tRNA release. In terms of biological role, protein L1 is also a translational repressor protein, it controls the translation of the L11 operon by binding to its mRNA. In Pseudoalteromonas translucida (strain TAC 125), this protein is Large ribosomal subunit protein uL1.